A 1194-amino-acid chain; its full sequence is Probable disease resistance protein RPP1 (1194 aa).

The tract at residues 1–27 is disordered; that stretch reads MGSVMSLGCSKRKATNQDVDSESRKRR. Residues 96–260 enclose the TIR domain; that stretch reads WKHDVFPSFH…KISTDVSNML (165 aa). Residue 105 to 110 coordinates NAD(+); it reads HGADVR. Glu171 is a catalytic residue. The NB-ARC domain maps to 280–535; it reads DMLEQLLRLD…ACLFNGESTT (256 aa). LRR repeat units lie at residues 623-647, 658-681, 690-713, 714-737, 739-760, 761-784, 786-807, 808-831, 832-855, 866-878, 879-899, 900-922, 943-965, and 966-991; these read LSNT…HFVR, QLAL…GYES, PEFL…TKQL, RNLK…STAT, LEEL…IEKL, TSLQ…ENAT, LREL…IGTA, TNLK…IGDI, TDLE…IGNL, CSKL…NINL, KSLD…PEIS, THIS…IMSW, FDII…VKRM, and SRLR…SLDY. The segment at 1170 to 1194 is disordered; it reads RRSSSPDLSPESSRVSSYDHCLRGD. Positions 1171–1185 are enriched in low complexity; it reads RSSSPDLSPESSRVS.

Belongs to the disease resistance TIR-NB-LRR family.

The catalysed reaction is NAD(+) + H2O = ADP-D-ribose + nicotinamide + H(+). Functionally, TIR-NB-LRR receptor-like protein that confers resistance to the pathogen Hyaloperonospora arabidopsis. Probably acts as a NAD(+) hydrolase (NADase): in response to activation, catalyzes cleavage of NAD(+) into ADP-D-ribose (ADPR) and nicotinamide; NAD(+) cleavage triggering a defense system that promotes cell death. This Arabidopsis thaliana (Mouse-ear cress) protein is Probable disease resistance protein RPP1.